A 305-amino-acid polypeptide reads, in one-letter code: Serine/threonine-protein phosphatase 6 catalytic subunit (305 aa).

M1 carries the N-acetylmethionine modification. Mn(2+) contacts are provided by D53, H55, D81, and N113. Residue H114 is the Proton donor of the active site. Positions 163 and 237 each coordinate Mn(2+).

Belongs to the PPP phosphatase family. PP-6 (PP-V) subfamily. As to quaternary structure, protein phosphatase 6 (PP6) holoenzyme is proposed to be a heterotrimeric complex formed by the catalytic subunit, a SAPS domain-containing subunit (PP6R) and an ankyrin repeat-domain containing regulatory subunit (ARS). Interacts with subunits PPP6R1, PPP6R2 and PPP6R3. Interacts with subunit ANKRD28. Interacts with IGBP1. Interacts with MAP3K7. Interacts with NFKBIE. Interacts with TRIM14 and WRNIP1; these interactions positively regulate the RIG-I signaling pathway. Requires Mn(2+) as cofactor. Ubiquitously expressed in all tissues tested with strongest expression in lung, spleen, liver, kidney and brain. Weaker expression observed in bladder, pancreas, heart and skeletal muscle.

Its subcellular location is the mitochondrion. It is found in the cytoplasm. The catalysed reaction is O-phospho-L-seryl-[protein] + H2O = L-seryl-[protein] + phosphate. It carries out the reaction O-phospho-L-threonyl-[protein] + H2O = L-threonyl-[protein] + phosphate. Its function is as follows. Catalytic subunit of protein phosphatase 6 (PP6). PP6 is a component of a signaling pathway regulating cell cycle progression in response to IL2 receptor stimulation. N-terminal domain restricts G1 to S phase progression in cancer cells, in part through control of cyclin D13 During mitosis, regulates spindle positioning. Down-regulates MAP3K7 kinase activation of the IL1 signaling pathway by dephosphorylation of MAP3K7. Acts as a regulator of innate immunity by mediating dephosphorylation CGAS, STING1 and RIGI. Also participates in the innate immune defense against viruses by desphosphorylating RIGI, an essential step that triggers RIGI-mediated signaling activation. Also regulates innate immunity by acting as a negative regulator of the cGAS-STING pathway: mediates dephosphorylation and inactivation of CGAS and STING1. CGAS dephosphorylation at 'Ser-420' impairs its ability to bind GTP, thereby inactivating it. This Mus musculus (Mouse) protein is Serine/threonine-protein phosphatase 6 catalytic subunit.